Reading from the N-terminus, the 510-residue chain is Cytochrome P450 4A6 (510 aa).

The propeptide occupies 1-4; sequence MSVS. Residues Glu-321 and Cys-457 each coordinate heme.

It belongs to the cytochrome P450 family. It depends on heme as a cofactor. Liver; kidney.

It is found in the endoplasmic reticulum membrane. The protein localises to the microsome membrane. The catalysed reaction is an omega-methyl-long-chain fatty acid + reduced [NADPH--hemoprotein reductase] + O2 = an omega-hydroxy-long-chain fatty acid + oxidized [NADPH--hemoprotein reductase] + H2O + H(+). Cytochromes P450 are a group of heme-thiolate monooxygenases. In liver microsomes, this enzyme is involved in an NADPH-dependent electron transport pathway. It oxidizes a variety of structurally unrelated compounds, including steroids, fatty acids, and xenobiotics. In terms of biological role, the kidney P-450 system is rather specialized for the omega-hydroxylation of fatty acids. Both P450-KA1 and P450-KA2 catalyze the omega- and (omega-1)-hydroxylation of various fatty acids with no drug-metabolizing activity, and hydroxylate prostaglandin A1 and A2 solely at the omega-position. This is Cytochrome P450 4A6 (CYP4A6) from Oryctolagus cuniculus (Rabbit).